Reading from the N-terminus, the 122-residue chain is Large ribosomal subunit protein bL19 (122 aa).

It belongs to the bacterial ribosomal protein bL19 family.

This protein is located at the 30S-50S ribosomal subunit interface and may play a role in the structure and function of the aminoacyl-tRNA binding site. The chain is Large ribosomal subunit protein bL19 from Chlamydia abortus (strain DSM 27085 / S26/3) (Chlamydophila abortus).